Reading from the N-terminus, the 307-residue chain is Protein phosphatase EYA (307 aa).

Residues 1–15 (MNNDTSKKLGTLVSD) form a necessary for optimum phosphatase activity region. The active-site Nucleophile is aspartate 25. Aspartate 25, aspartate 27, and aspartate 253 together coordinate Mg(2+). The active-site Proton donor is the aspartate 27.

The protein belongs to the HAD-like hydrolase superfamily. EYA family. Mg(2+) is required as a cofactor.

The catalysed reaction is O-phospho-L-tyrosyl-[protein] + H2O = L-tyrosyl-[protein] + phosphate. With respect to regulation, inhibited by EDTA. Its function is as follows. Possesses phosphatase activity toward para-nitrophenyl phosphate (pNPP) in vitro. Possesses phosphatase activity toward several phosphotyrosine-containing peptides in vitro, with low peptide substrate specificity. This is Protein phosphatase EYA from Arabidopsis thaliana (Mouse-ear cress).